A 282-amino-acid chain; its full sequence is MSNKIIGLGSIEIANDKPFVLFGGMNVLESRDLAMKIAETYAEVTQKLGIPYVFKASFDKANRSSVNSYRGPGMEEGLKIFEEIKSTFNLPLITDVHEVHQCAPVAEVVDIIQLPAFLARQTDLVVAMAKTDAIINVKKPQFLAPHEMRHIITKFNEAGNDKIILCERGSSFGYNNLVVDMLGMDEMKQSGYPVIFDATHALQRPGGRSDSAGGRRAQATELARSGMALGLAGLFIEAHPDPDNAKCDGPCALPLHQLEAYLTQMKAVDDLVKSFDAIDTSK.

This sequence belongs to the KdsA family.

The protein resides in the cytoplasm. It carries out the reaction D-arabinose 5-phosphate + phosphoenolpyruvate + H2O = 3-deoxy-alpha-D-manno-2-octulosonate-8-phosphate + phosphate. The protein operates within carbohydrate biosynthesis; 3-deoxy-D-manno-octulosonate biosynthesis; 3-deoxy-D-manno-octulosonate from D-ribulose 5-phosphate: step 2/3. It participates in bacterial outer membrane biogenesis; lipopolysaccharide biosynthesis. The sequence is that of 2-dehydro-3-deoxyphosphooctonate aldolase from Shewanella sediminis (strain HAW-EB3).